A 527-amino-acid chain; its full sequence is Cytochrome P450 monooxygenase olcJ (527 aa).

A helical membrane pass occupies residues 21 to 43; the sequence is GLLTRYNVFMAISITVTALYLIH. A heme-binding site is contributed by Cys-464.

The protein belongs to the cytochrome P450 family. Heme is required as a cofactor.

It is found in the membrane. The protein operates within secondary metabolite biosynthesis; terpenoid biosynthesis. In terms of biological role, cytochrome P450 monooxygenase; part of the gene cluster that mediates the biosynthesis of 15-deoxyoxalicine B. The first step of the pathway is the synthesis of nicotinyl-CoA from nicotinic acid by the nicotinic acid-CoA ligase olcI. Nicotinyl-CoA is then a substrate of polyketide synthase olcA to produce 4-hydroxy-6-(3-pyridinyl)-2H-pyran-2-one (HPPO) which is further prenylated by the polyprenyl transferase olcH to yield geranylgeranyl-HPPO. Geranylgeranyl pyrophosphate is provided by the cluster-specific geranylgeranyl pyrophosphate synthase olcC. The FAD-dependent monooxygenase olcE catalyzes the epoxidation of geranylgeranyl-HPPO and the terpene cyclase olcD catalyzes the cyclization of the terpenoid component, resulting in the formation of the tricyclic terpene moiety seen in predecaturin E. The cytochrome P450 monooxygenase then catalyzes the allylic oxidation of predecaturin E, which is followed by spirocylization with concomitant loss of one molecule of water to form decaturin E. Decaturin E is the substrate of the cytochrome P450 monooxygenase olcJ which hydroxylates it at the C-29 position to form decaturin F. The short-chain dehydrogenase/reductase olcF may catalyze the oxidation of decaturin F to generate the 29-hydroxyl-27-one intermediate, and subsequent hemiacetal formation probably leads to the formation of decaturin C. The dioxygenase olcK may be a peroxisomal enzyme that catalyzes the hydroxylation of decaturin C into decaturin A once decaturin C is shuttled into the peroxisome by the MFS transporter olcL. Finally the cytochrome P450 monooxygenase olcB catalyzes the oxidative rearrangement to yield 15-deoxyoxalicine B. In the absence of olcJ, decaturin E may be shunted to a pathway in which it is oxidized to a ketone, possibly by olcF, to form decaturin D, which undergoes further allylic oxidation to yield decaturin G. Moreover, in the absence of oclK or oclL, oclB can convert decaturin C into 15-deoxyoxalicine A. The protein is Cytochrome P450 monooxygenase olcJ of Penicillium canescens.